The following is a 427-amino-acid chain: GTPase ERA-like, chloroplastic (427 aa).

A chloroplast-targeting transit peptide spans 1 to 39 (MAVSPHISPTLSRYKFFSTSVVENPNFSPYRIYSRRRVT). Residues 128–298 (RSGYVAVVGM…KEWILSKLPF (171 aa)) enclose the Era-type G domain. A G1 region spans residues 136-143 (GMPNVGKS). 136–143 (GMPNVGKS) serves as a coordination point for GTP. Residues 162 to 166 (QTTRH) are G2. The interval 183–186 (DTPG) is G3. Residues 183-187 (DTPGV) and 248-251 (NKKD) each bind GTP. Residues 248–251 (NKKD) are G4. A G5 region spans residues 277-279 (VSA). Residues 329–406 (YRNEVPYACQ…FLEVEVKVKE (78 aa)) enclose the KH type-2 domain.

Belongs to the TRAFAC class TrmE-Era-EngA-EngB-Septin-like GTPase superfamily. Era GTPase family.

Its subcellular location is the plastid. It localises to the chloroplast stroma. It is found in the chloroplast nucleoid. In terms of biological role, nuclear genome-encoded probable GTPase involved in ribosome biogenesis in chloroplasts. Plays a role in 16S rRNA maturation in plastids and may contribute to the assembly of the small (30S) ribosomal subunit. This is GTPase ERA-like, chloroplastic from Arabidopsis thaliana (Mouse-ear cress).